Consider the following 162-residue polypeptide: Anthrone oxygenase nsrD (162 aa).

3 helical membrane-spanning segments follow: residues 17–37, 54–74, and 86–106; these read FLSG…LDTI, GSIY…YVAL, and PYVL…WVMV. N109 carries an N-linked (GlcNAc...) asparagine glycan. A helical membrane pass occupies residues 130-150; the sequence is LVVKWAWLHVVRSLYPLFGAF.

Belongs to the anthrone oxygenase family.

Its subcellular location is the membrane. It catalyses the reaction emodin anthrone + O2 = emodin + H2O + H(+). The protein operates within secondary metabolite biosynthesis. Functionally, anthrone oxygenase; part of the gene cluster that mediates the biosynthesis of the tetrahydroxanthone dimer neosartorin, which exhibits antibacterial activity. The two different monomeric units appear to be synthesized by the same set of enzymes, among which the Baeyer-Villiger monooxygenase nsrF is the key enzyme for the divergence of the biosynthetic routes. The pathway begins with the synthesis of atrochrysone thioester by the polyketide synthase nsrB. The atrochrysone carboxyl ACP thioesterase nsrC then breaks the thioester bond and releases the atrochrysone carboxylic acid from AacuL. Atrochrysone carboxylic acid is decarboxylated by the decarboxylase nsrE, and oxidized by the anthrone oxygenase nsrD to yield emodin. Emodin is then reduced to emodin hydroquinone by the oxidoreductase nsrR. A-ring reduction by the short chain dehydrogenase nsrJ, dehydration by the scytalone dehydratase-like protein nsrI and probable spontaneous re-oxidation, results in overall deoxygenation to chrysophanol. The Baeyer-Villiger monooxygenase nsrF accepts chrysophanol as a substrate to insert one oxygen atom at two different positions to yield the precursors of both monomric units. NsrF is promiscuous/flexible in interacting with the 2 (non methylated and methylated) aromatic rings of chrysophanol, thus diverging the biosynthetic pathway at this point. After the hydrolysis of the lactones, methylesterification by the methyltransferase nsrG yields respectively moniliphenone and 2,2',6'-trihydroxy-4-methyl-6-methoxya-cyldiphenylmethanone. The next steps are the hydroxylation by the FAD-dependent monooxygenase nsrK, followed by isomerization by the monooxygenase nsrQ. The short chain dehydrogenase/reductase nsrO then catalyzes the C-5 ketoreduction to give the xanthone skeleton of blennolide C and 5-acetylblennolide A. The acetyltransferase nsrL has a strict substrate specificity and uses only blennolide A but not blennolide C to yield 5-acetylblennolide A as the single-acetylated product. In the final step of the biosynthesis, the heterodimerization of the 2 xanthones, blennolide C and 5-acetylblennolide A, is catalyzed by the cytochrome P450 monooxygenase nsrP. NsrP can utilize at least three different xanthones as its substrates to perform the dimerization reaction. This is Anthrone oxygenase nsrD from Aspergillus novofumigatus (strain IBT 16806).